Reading from the N-terminus, the 1203-residue chain is Delphilin (1203 aa).

Residues 1–79 (MPATNQGWPE…VPPSLGVLPG (79 aa)) form the PDZ 1 domain. Residue A3 is the site of S-palmitoyl cysteine attachment. Positions 215–270 (GAQRLRRSRSEERPERLLVSTRASAAPRRPDEPPPRKATSLLGGRTGPGGPRRTVR) are disordered. Low complexity predominate over residues 231-241 (LLVSTRASAAP). A PDZ 2 domain is found at 268 to 345 (TVRVYKGNKS…MPTLVVEEGP (78 aa)). S303 bears the Phosphoserine mark. 4 disordered regions span residues 466 to 541 (ESSL…TPNP), 563 to 586 (IGTM…GPRT), 611 to 656 (LASP…PPSR), and 710 to 821 (SFVT…SHMS). Over residues 500–509 (RSQGLETSLS) the composition is skewed to polar residues. Residues S572, S613, S644, and S647 each carry the phosphoserine modification. The span at 611–625 (LASPSSSESHPYASL) shows a compositional bias: low complexity. Low complexity predominate over residues 715–740 (ERSSASECVSSSEEGSSLTYSSISDH). The segment covering 741–756 (IPPPPLSPPPPPPLPF) has biased composition (pro residues). The segment covering 774–784 (QSLTKPLTQIN) has biased composition (polar residues). The segment covering 786–803 (PVPPPPPPPLPPPVPCAP) has biased composition (pro residues). Positions 812 to 1203 (HRRSETSHMS…SSGMVSPLAW (392 aa)) constitute an FH2 domain.

Interacts with C-terminus of the glutamate receptor GRID2 via PDZ domain. Isoform 2 also interacts with Profilin-2/PFN2 and with the monocarboxylate transporter SLC16A7 via PDZ domain. The interaction of isoform 2 with GRID2 is dependent on GRID2 phosphorylation by PKA. Post-translationally, isoform 2 is palmitoylated. Palmitoylation of isoform 2 is necessary for the enhanced cell surface expression of GRID2, and is also responsible for the accumulation of isoform 2 within dendritic spines. Isoform 1 and isoform 2 are differentially localized, probably modulating GRID2 signaling in neurons. Isoform 1 is expressed in the cerebellum, but not in the cerebral cortex. Isoform 2 is expressed in the cell body of purkinge cells of the cerebellum and weakly expressed in the cerebrum and the brainstem as well as various nuclei of the thalamus. Isoform 2 is highly expressed in the cerebral cortex than in the cerebellum. Isoform 3 is expressed in the cerebellum and cerebrum.

The protein localises to the postsynaptic cell membrane. Its subcellular location is the cell projection. It is found in the dendritic spine. The protein resides in the synapse. It localises to the cell membrane. In terms of biological role, postsynaptic scaffolding protein at the Purkinje cell synapse, where it may serve to link GRID2 with actin cytoskeleton and various signaling molecules. This is Delphilin (Grid2ip) from Mus musculus (Mouse).